A 68-amino-acid chain; its full sequence is Large ribosomal subunit protein bL35 (68 aa).

This sequence belongs to the bacterial ribosomal protein bL35 family.

In Wolbachia pipientis subsp. Culex pipiens (strain wPip), this protein is Large ribosomal subunit protein bL35.